The primary structure comprises 380 residues: Septin homolog spn4 (380 aa).

A Septin-type G domain is found at 25–298 (NGVAFTLMLC…EQYRQEQMKV (274 aa)). A G1 motif region spans residues 35-42 (GESGLGKT). Residues 35-42 (GESGLGKT), Thr-70, Gly-96, 175-183 (KADMYTRRD), Gly-231, and Arg-247 each bind GTP. The interval 93 to 96 (DTPG) is G3 motif. The segment at 174–177 (AKAD) is G4 motif.

Belongs to the TRAFAC class TrmE-Era-EngA-EngB-Septin-like GTPase superfamily. Septin GTPase family. In terms of assembly, component of the septin complex composed of two copies of each spn1, spn2, spn3 and spn4.

The protein resides in the cytoplasm. Its subcellular location is the cell cortex. Functionally, plays a role in the cell cycle. Involved in a late stage of septum formation leading to the separation of the daughter cells. This is Septin homolog spn4 (spn4) from Schizosaccharomyces pombe (strain 972 / ATCC 24843) (Fission yeast).